The chain runs to 955 residues: Villin-5 (955 aa).

Gelsolin-like repeat units lie at residues 29 to 111 (FKPV…DKFL), 152 to 218 (VHVK…VEDG), 274 to 339 (LLHE…TVMF), and 644 to 712 (HFTQ…GSEP). 2 disordered regions span residues 741-783 (KGGG…RVRV) and 801-895 (NSRN…GLPV). A compositionally biased stretch (polar residues) spans 756-776 (PTYSGRSTVQDKSQRSRSMSF). A compositionally biased stretch (low complexity) spans 817–836 (PKSATPDSSSAPSKSSATAS). Positions 842–864 (DRPKSVKDGSELEKPKQEEDAKE) are enriched in basic and acidic residues. Positions 867 to 878 (NTMTSRVESLTI) are enriched in polar residues. The HP domain occupies 890–955 (DEGLPVYPYD…NRMKIALQLF (66 aa)).

The protein belongs to the villin/gelsolin family.

Its subcellular location is the cytoplasm. The protein localises to the cytoskeleton. Ca(2+)-regulated actin-binding protein. Binds actin microfilaments (MFs). Involved in actin filament bundling, severing and capping. Caps the barbed end of actin filaments and is able to sever them in a calcium-dependent manner. This is Villin-5 from Oryza sativa subsp. japonica (Rice).